We begin with the raw amino-acid sequence, 79 residues long: MVTIRLARGGSKKRPFYHLNVTDSRNARDGRFIERVGFFNPTARGNDERIRVDAERLQFWVERGAQMSDRVRDLVKASA.

Belongs to the bacterial ribosomal protein bS16 family.

This is Small ribosomal subunit protein bS16 from Hahella chejuensis (strain KCTC 2396).